We begin with the raw amino-acid sequence, 133 residues long: Small ribosomal subunit protein uS8 (133 aa).

This sequence belongs to the universal ribosomal protein uS8 family. In terms of assembly, part of the 30S ribosomal subunit. Contacts proteins S5 and S12.

Its function is as follows. One of the primary rRNA binding proteins, it binds directly to 16S rRNA central domain where it helps coordinate assembly of the platform of the 30S subunit. The sequence is that of Small ribosomal subunit protein uS8 from Prochlorococcus marinus (strain AS9601).